Reading from the N-terminus, the 305-residue chain is Protein FdhE homolog (305 aa).

It belongs to the FdhE family.

The protein resides in the cytoplasm. Its function is as follows. Necessary for formate dehydrogenase activity. This chain is Protein FdhE homolog, found in Stutzerimonas stutzeri (strain A1501) (Pseudomonas stutzeri).